The primary structure comprises 277 residues: 2-dehydro-3-deoxyphosphooctonate aldolase (277 aa).

The protein belongs to the KdsA family.

Its subcellular location is the cytoplasm. The enzyme catalyses D-arabinose 5-phosphate + phosphoenolpyruvate + H2O = 3-deoxy-alpha-D-manno-2-octulosonate-8-phosphate + phosphate. The protein operates within carbohydrate biosynthesis; 3-deoxy-D-manno-octulosonate biosynthesis; 3-deoxy-D-manno-octulosonate from D-ribulose 5-phosphate: step 2/3. Its pathway is bacterial outer membrane biogenesis; lipopolysaccharide biosynthesis. The protein is 2-dehydro-3-deoxyphosphooctonate aldolase of Syntrophotalea carbinolica (strain DSM 2380 / NBRC 103641 / GraBd1) (Pelobacter carbinolicus).